The primary structure comprises 429 residues: Adenosylhomocysteinase (429 aa).

Positions 64, 136, and 161 each coordinate substrate. 162–164 (TTT) is an NAD(+) binding site. The substrate site is built by Lys-191 and Asp-195. Residues Asn-196, 225–230 (GYGWCG), Glu-248, Asn-283, 304–306 (SGH), and Asn-351 each bind NAD(+).

This sequence belongs to the adenosylhomocysteinase family. It depends on NAD(+) as a cofactor.

Its subcellular location is the cytoplasm. The enzyme catalyses S-adenosyl-L-homocysteine + H2O = L-homocysteine + adenosine. Its pathway is amino-acid biosynthesis; L-homocysteine biosynthesis; L-homocysteine from S-adenosyl-L-homocysteine: step 1/1. Its function is as follows. May play a key role in the regulation of the intracellular concentration of adenosylhomocysteine. This Gloeothece citriformis (strain PCC 7424) (Cyanothece sp. (strain PCC 7424)) protein is Adenosylhomocysteinase.